Reading from the N-terminus, the 514-residue chain is Na(+)/H(+) antiporter NhaB (514 aa).

Helical transmembrane passes span 23-43 (LALL…SFVA), 52-72 (IFTL…LLAI), 97-117 (LLLM…LFIF), 120-140 (LLLS…AAAF), 144-164 (FLDA…FYGI), 202-222 (LMMH…VGEP), 238-258 (FFLR…LTCM), 303-323 (AIIG…VGLI), 357-377 (LTVF…APII), 391-411 (LFYL…VGTI), 447-467 (ATPN…APLI), and 475-495 (VWMA…CVEF).

This sequence belongs to the NhaB Na(+)/H(+) (TC 2.A.34) antiporter family.

Its subcellular location is the cell inner membrane. It carries out the reaction 2 Na(+)(in) + 3 H(+)(out) = 2 Na(+)(out) + 3 H(+)(in). In terms of biological role, na(+)/H(+) antiporter that extrudes sodium in exchange for external protons. In Salmonella arizonae (strain ATCC BAA-731 / CDC346-86 / RSK2980), this protein is Na(+)/H(+) antiporter NhaB.